Consider the following 281-residue polypeptide: Very-long-chain (3R)-3-hydroxyacyl-CoA dehydratase 1 (281 aa).

At 1–68 (MGKGDWRQGR…RRLGLLATAW (68 aa)) the chain is on the cytoplasmic side. The helical transmembrane segment at 69 to 88 (LTFYNIAMTAGWLVLAIAMV) threads the bilayer. Residues 89–107 (RFYMEKGTHRGLYKSIQKT) are Lumenal-facing. Residues 108-124 (LKFFQTFALLEVVHCLI) traverse the membrane as a helical segment. The Cytoplasmic portion of the chain corresponds to 125 to 134 (GIVPTSVLVT). A helical membrane pass occupies residues 135 to 152 (GVQVSSRIFMVWLITHSI). The Lumenal segment spans residues 153 to 158 (KPIQNE). A helical membrane pass occupies residues 159–173 (ESVVLFLVSWTVTEI). The Cytoplasmic portion of the chain corresponds to 174–196 (TRYSFYTFSLLDHLPHFIKWARY). A helical transmembrane segment spans residues 197 to 214 (NLFIILYPVGVAGELLTI). Active-site residues include tyrosine 203 and glutamate 210. Residues 215–244 (YAALPYVKKSGMFSVRLPNKYNVSFDYYYF) are Lumenal-facing. Asparagine 236 carries an N-linked (GlcNAc...) asparagine glycan. Residues 245–262 (LLITMASYIPLFPQLYFH) form a helical membrane-spanning segment. Topologically, residues 263 to 281 (MLRQRRKVLHGEVIAEKDD) are cytoplasmic.

It belongs to the very long-chain fatty acids dehydratase HACD family. May interact with enzymes of the ELO family (including ELOVL1); with those enzymes that mediate condensation, the first of the four steps of the reaction cycle responsible for fatty acids elongation, may be part of a larger fatty acids elongase complex. Interacts with TECR. N-glycosylated. In terms of tissue distribution, expressed at high levels in heart, skeletal muscle and testis, weak expression in kidney and liver.

The protein localises to the endoplasmic reticulum membrane. The catalysed reaction is a very-long-chain (3R)-3-hydroxyacyl-CoA = a very-long-chain (2E)-enoyl-CoA + H2O. The enzyme catalyses (3R)-hydroxyhexadecanoyl-CoA = (2E)-hexadecenoyl-CoA + H2O. It catalyses the reaction (3R)-hydroxyoctadecanoyl-CoA = (2E)-octadecenoyl-CoA + H2O. It carries out the reaction (3R)-hydroxyeicosanoyl-CoA = (2E)-eicosenoyl-CoA + H2O. The catalysed reaction is (3R)-hydroxydocosanoyl-CoA = (2E)-docosenoyl-CoA + H2O. The enzyme catalyses (3R)-hydroxytetracosanoyl-CoA = (2E)-tetracosenoyl-CoA + H2O. It catalyses the reaction (3R)-hydroxyhexacosanoyl-CoA = (2E)-hexacosenoyl-CoA + H2O. Its pathway is lipid metabolism; fatty acid biosynthesis. This chain is Very-long-chain (3R)-3-hydroxyacyl-CoA dehydratase 1, found in Mus musculus (Mouse).